Here is a 349-residue protein sequence, read N- to C-terminus: Meiotic recombination protein DMC1 homolog (349 aa).

Gly138–Thr145 provides a ligand contact to ATP. Arg240 contacts dsDNA. SsDNA is bound by residues Arg240, Phe243, Arg246, Arg252, and Arg320. Residues Arg246 and Arg252 each coordinate dsDNA.

Belongs to the RecA family. DMC1 subfamily. Double stacked ring-shaped homooctamer.

The protein resides in the nucleus. Its function is as follows. May participate in meiotic recombination. In Lilium longiflorum (Trumpet lily), this protein is Meiotic recombination protein DMC1 homolog (LIM15).